A 331-amino-acid chain; its full sequence is Type II secretion system protein K (331 aa).

Positions 1–9 (MPSCRRQGG) are cleaved as a propeptide — leader sequence. The helical transmembrane segment at 8 to 27 (GGMALLVVLLILSVMVIIAS) threads the bilayer. The Periplasmic segment spans residues 28–331 (NMSGRLQLEL…MLRRLNGGAE (304 aa)).

The protein belongs to the GSP K family. In terms of assembly, type II secretion is composed of four main components: the outer membrane complex, the inner membrane complex, the cytoplasmic secretion ATPase and the periplasm-spanning pseudopilus. Interacts with core component ExeG. In terms of processing, cleaved by prepilin peptidase.

It localises to the cell inner membrane. In terms of biological role, component of the type II secretion system required for the energy-dependent secretion of extracellular factors such as proteases and toxins from the periplasm. Plays a role in pseudopilus assembly and seems to control its length. Interacts with the pseudopilus tip complex that is critical for the recognition and binding of secretion substrates. The polypeptide is Type II secretion system protein K (exeK) (Aeromonas hydrophila).